Consider the following 224-residue polypeptide: Ribosomal RNA small subunit methyltransferase G (224 aa).

S-adenosyl-L-methionine contacts are provided by residues Gly-89, Phe-94, 140–141 (AE), and Arg-153.

This sequence belongs to the methyltransferase superfamily. RNA methyltransferase RsmG family.

It is found in the cytoplasm. Its function is as follows. Specifically methylates the N7 position of a guanine in 16S rRNA. The chain is Ribosomal RNA small subunit methyltransferase G from Bacteroides fragilis (strain YCH46).